The chain runs to 2191 residues: Genome polyprotein (2191 aa).

A lipid anchor (N-myristoyl glycine; by host) is attached at G2. The Cytoplasmic segment spans residues 2 to 1501 (GAQVSTQKTG…HVSRAFICLQ (1500 aa)). Residues 566 to 582 (FYQNDVQNAVERSIVRV) form an amphipathic alpha-helix region. Catalysis depends on for protease 2A activity residues H878 and D896. Residues C913 and C915 each coordinate Zn(2+). The active-site For protease 2A activity is C967. C973 and H975 together coordinate Zn(2+). Residues 1107–1179 (NNGWLKKFTE…EQSAPSQSDQ (73 aa)) form a membrane-binding region. Residues 1107–1245 (NNGWLKKFTE…SPGVGKSVAT (139 aa)) are oligomerization. The tract at residues 1128–1132 (AIKIQ) is RNA-binding. In terms of domain architecture, SF3 helicase spans 1211–1367 (EKKMSNYIQF…SMYNQNGKIN (157 aa)). Zn(2+) contacts are provided by C1375, C1387, and C1392. The C4-type; degenerate zinc finger occupies 1375–1392 (CDEECCPVNFKKCCPLVC). The RNA-binding stretch occupies residues 1419 to 1426 (EYNHRHSV). The interval 1430-1435 (LEALFQ) is oligomerization. The stretch at 1502–1517 (ALTTFVSVAGIIYIIY) is an intramembrane region. The Cytoplasmic portion of the chain corresponds to 1518–2191 (KLFAGFQGAY…TLRRKWLDSF (674 aa)). The residue at position 1527 (Y1527) is an O-(5'-phospho-RNA)-tyrosine. The Peptidase C3 domain maps to 1547-1725 (GPAFEFAVAM…FSAALLKHYF (179 aa)). Residues H1586, E1617, and C1693 each act as for protease 3C activity in the active site. The RdRp catalytic domain maps to 1956-2072 (GHLIAFDYSG…SYPWPIDASL (117 aa)). 2 residues coordinate Mg(2+): D1962 and D2058.

The protein belongs to the picornaviruses polyprotein family. As to quaternary structure, interacts with capsid protein VP1 and capsid protein VP3 to form heterotrimeric protomers. In terms of assembly, interacts with capsid protein VP0, and capsid protein VP3 to form heterotrimeric protomers. Five protomers subsequently associate to form pentamers which serve as building blocks for the capsid. Interacts with capsid protein VP2, capsid protein VP3 and capsid protein VP4 following cleavage of capsid protein VP0. Interacts with host CD55 and FCGRT; these interactions promote virus attachment to the host cell and subsequent internalization. Interacts with capsid protein VP1 and capsid protein VP3 in the mature capsid. Interacts with host CD55 and FCGRT; these interactions promote virus attachment to the host cell and subsequent internalization. As to quaternary structure, interacts with capsid protein VP0 and capsid protein VP1 to form heterotrimeric protomers. Five protomers subsequently associate to form pentamers which serve as building blocks for the capsid. Interacts with capsid protein VP4 in the mature capsid. Interacts with protein 2C; this interaction may be important for virion morphogenesis. Interacts with host FCGRT; this interaction promotes virus attachment to the host cell and subsequent internalization. In terms of assembly, interacts with capsid protein VP1 and capsid protein VP3. Homodimer. As to quaternary structure, homohexamer; forms a hexameric ring structure with 6-fold symmetry characteristic of AAA+ ATPases. Interacts (via N-terminus) with host RTN3 (via reticulon domain); this interaction is important for viral replication. Interacts with capsid protein VP3; this interaction may be important for virion morphogenesis. In terms of assembly, interacts with protein 3CD. Homodimer. Interacts with host GBF1. Interacts (via GOLD domain) with host ACBD3 (via GOLD domain); this interaction allows the formation of a viral protein 3A/ACBD3 heterotetramer with a 2:2 stoichiometry, which will stimulate the recruitment of host PI4KB in order to synthesize PI4P at the viral RNA replication sites. As to quaternary structure, interacts with RNA-directed RNA polymerase. In terms of assembly, interacts with protein 3AB and with RNA-directed RNA polymerase. Interacts with Viral protein genome-linked and with protein 3CD. Mg(2+) is required as a cofactor. In terms of processing, specific enzymatic cleavages in vivo by the viral proteases yield processing intermediates and the mature proteins. Myristoylation is required for the formation of pentamers during virus assembly. Further assembly of 12 pentamers and a molecule of genomic RNA generates the provirion. Post-translationally, during virion maturation, immature virions are rendered infectious following cleavage of VP0 into VP4 and VP2. This maturation seems to be an autocatalytic event triggered by the presence of RNA in the capsid and it is followed by a conformational change infectious virion. In terms of processing, myristoylation is required during RNA encapsidation and formation of the mature virus particle. VPg is uridylylated by the polymerase into VPg-pUpU. This acts as a nucleotide-peptide primer for the genomic RNA replication.

The protein resides in the virion. It localises to the host cytoplasm. Its subcellular location is the host cytoplasmic vesicle membrane. The protein localises to the host nucleus. The enzyme catalyses a ribonucleoside 5'-triphosphate + H2O = a ribonucleoside 5'-diphosphate + phosphate + H(+). It carries out the reaction Selective cleavage of Tyr-|-Gly bond in the picornavirus polyprotein.. It catalyses the reaction RNA(n) + a ribonucleoside 5'-triphosphate = RNA(n+1) + diphosphate. The catalysed reaction is Selective cleavage of Gln-|-Gly bond in the poliovirus polyprotein. In other picornavirus reactions Glu may be substituted for Gln, and Ser or Thr for Gly.. Replication or transcription is subject to high level of random mutations by the nucleotide analog ribavirin. Its function is as follows. Forms an icosahedral capsid of pseudo T=3 symmetry with capsid proteins VP2 and VP3. The capsid is 300 Angstroms in diameter, composed of 60 copies of each capsid protein and enclosing the viral positive strand RNA genome. Capsid protein VP1 mainly forms the vertices of the capsid. Capsid protein VP1 interacts with host cell receptor to provide virion attachment to target host cells. This attachment induces virion internalization. Tyrosine kinases are probably involved in the entry process. After binding to its receptor, the capsid undergoes conformational changes. Capsid protein VP1 N-terminus (that contains an amphipathic alpha-helix) and capsid protein VP4 are externalized. Together, they shape a pore in the host membrane through which viral genome is translocated to host cell cytoplasm. In terms of biological role, forms an icosahedral capsid of pseudo T=3 symmetry with capsid proteins VP2 and VP3. The capsid is 300 Angstroms in diameter, composed of 60 copies of each capsid protein and enclosing the viral positive strand RNA genome. Functionally, lies on the inner surface of the capsid shell. After binding to the host receptor, the capsid undergoes conformational changes. Capsid protein VP4 is released, Capsid protein VP1 N-terminus is externalized, and together, they shape a pore in the host membrane through which the viral genome is translocated into the host cell cytoplasm. Component of immature procapsids, which is cleaved into capsid proteins VP4 and VP2 after maturation. Allows the capsid to remain inactive before the maturation step. Its function is as follows. Cysteine protease that cleaves viral polyprotein and specific host proteins. It is responsible for the autocatalytic cleavage between the P1 and P2 regions, which is the first cleavage occurring in the polyprotein. Also cleaves the host translation initiation factor EIF4G1, in order to shut down the capped cellular mRNA translation. Inhibits the host nucleus-cytoplasm protein and RNA trafficking by cleaving host members of the nuclear pores. Counteracts stress granule formation probably by antagonizing its assembly or promoting its dissassembly. In terms of biological role, plays an essential role in the virus replication cycle by acting as a viroporin. Creates a pore in the host endoplasmic reticulum and as a consequence releases Ca2+ in the cytoplasm of infected cell. In turn, high levels of cytoplasmic calcium may trigger membrane trafficking and transport of viral ER-associated proteins to viroplasms, sites of viral genome replication. Functionally, induces and associates with structural rearrangements of intracellular membranes. Displays RNA-binding, nucleotide binding and NTPase activities. May play a role in virion morphogenesis and viral RNA encapsidation by interacting with the capsid protein VP3. Localizes the viral replication complex to the surface of membranous vesicles. Together with protein 3CD binds the Cis-Active RNA Element (CRE) which is involved in RNA synthesis initiation. Acts as a cofactor to stimulate the activity of 3D polymerase, maybe through a nucleid acid chaperone activity. Its function is as follows. Localizes the viral replication complex to the surface of membranous vesicles. It inhibits host cell endoplasmic reticulum-to-Golgi apparatus transport and causes the disassembly of the Golgi complex, possibly through GBF1 interaction. This would result in depletion of MHC, trail receptors and IFN receptors at the host cell surface. Plays an essential role in viral RNA replication by recruiting ACBD3 and PI4KB at the viral replication sites, thereby allowing the formation of the rearranged membranous structures where viral replication takes place. In terms of biological role, acts as a primer for viral RNA replication and remains covalently bound to viral genomic RNA. VPg is uridylylated prior to priming replication into VPg-pUpU. The oriI viral genomic sequence may act as a template for this. The VPg-pUpU is then used as primer on the genomic RNA poly(A) by the RNA-dependent RNA polymerase to replicate the viral genome. During genome replication, the VPg-RNA linkage is removed by the host TDP2, thereby accelerating replication. During the late stage of the replication cycle, host TDP2 is excluded from sites of viral RNA synthesis and encapsidation, allowing for the generation of progeny virions. Functionally, involved in the viral replication complex and viral polypeptide maturation. It exhibits protease activity with a specificity and catalytic efficiency that is different from protease 3C. Protein 3CD binds to the 5'UTR of the viral genome. Replicates the viral genomic RNA on the surface of intracellular membranes. May form linear arrays of subunits that propagate along a strong head-to-tail interaction called interface-I. Covalently attaches UMP to a tyrosine of VPg, which is used to prime RNA synthesis. The positive stranded RNA genome is first replicated at virus induced membranous vesicles, creating a dsRNA genomic replication form. This dsRNA is then used as template to synthesize positive stranded RNA genomes. ss(+)RNA genomes are either translated, replicated or encapsidated. Its function is as follows. Major viral protease that mediates proteolytic processing of the polyprotein. Cleaves host EIF5B, contributing to host translation shutoff. Also cleaves host PABPC1, contributing to host translation shutoff. Cleaves host NLRP1, triggers host N-glycine-mediated degradation of the autoinhibitory NLRP1 N-terminal fragment. The chain is Genome polyprotein from Echovirus 6 (strain Charles).